Reading from the N-terminus, the 99-residue chain is Bacterial microcompartment protein homohexamer (99 aa).

Positions Ala-4–Pro-88 constitute a BMC domain.

The protein belongs to the bacterial microcompartments protein family. As to quaternary structure, homohexamer with a small central pore. When purified protein is examined by atomic force microscopy it dynamically makes uniform patches about 35 Angstroms thick with hexamers in the same orientation. In the BMC the concave side faces outward, with the N- and C-terminii exposed to the cytoplasm.

The protein localises to the bacterial microcompartment. Functionally, the only hexameric shell protein in this bacterium, it forms the majority of the bacterial microcompartment (BMC) shell. Expression of 5 proteins in E.coli (BMC-H (Hoch_5815), BMC-P (Hoch_5814), and 3 BMC-T (Hoch_5812, Hoch_5816, Hoch_3341)) forms a 40 nm artificial BMC with a molecular mass of 6.5 MDa. There are 60 BMC-H hexamers per BMC. The shell facets are 20-30 Angstroms thick (a single hexamer layer), with 1 of BMC-T trimers protruding to the exterior. This Haliangium ochraceum (strain DSM 14365 / JCM 11303 / SMP-2) protein is Bacterial microcompartment protein homohexamer.